Consider the following 680-residue polypeptide: Meiotic recombination protein REC8 (680 aa).

Composition is skewed to low complexity over residues 278-290 and 436-446; these read ENDN…GGED and SLVSTQSSSST. Disordered regions lie at residues 278–297, 431–467, and 540–560; these read ENDN…ENEG, RKRA…YSSD, and EQNF…GSQQ. Polar residues predominate over residues 550–560; the sequence is SNSCFSDGSQQ.

This sequence belongs to the rad21 family. Post-translationally, proteolytically cleaved by ESP1. Phosphorylated by CDC5. CDC5 phosphorylation is necessary for cleavage by ESP1 and subsequent removal from chromosome arms.

Its subcellular location is the nucleus. It localises to the chromosome. The protein resides in the centromere. Functionally, replaces the SCC1 mitosis-specific cohesin to ensure sister chromatid cohesion during meiosis. Is cleaved by ESP1 shortly before the first meiotic division, and dissociates from chromatin, allowing sister chromatids to segregate. Is protected from cleavage by SPO13. Promotes localization of the LINC complex subunit MPS3 on nuclear envelope in mitotic cells. The protein is Meiotic recombination protein REC8 of Saccharomyces cerevisiae (strain ATCC 204508 / S288c) (Baker's yeast).